The primary structure comprises 285 residues: Casein kinase II subunit beta-2 (285 aa).

The interval 226-285 (FKDAEDEAELDDDDEEEEEEEEEEEELAAMDEAEGAQQQHAAAAAGTATGGVAAGGEGVH) is disordered. Residues 229 to 259 (AEDEAELDDDDEEEEEEEEEEEELAAMDEAE) show a composition bias toward acidic residues. Residues 260 to 272 (GAQQQHAAAAAGT) show a composition bias toward low complexity. The segment covering 273–285 (ATGGVAAGGEGVH) has biased composition (gly residues).

It belongs to the casein kinase 2 subunit beta family. Tetramer composed of two alpha chains, one beta chain and one beta' chain. Phosphorylated by alpha subunit.

Functionally, regulatory subunit of casein kinase II/CK2. As part of the kinase complex regulates the basal catalytic activity of the alpha subunit a constitutively active serine/threonine-protein kinase that phosphorylates a large number of substrates containing acidic residues C-terminal to the phosphorylated serine or threonine. The polypeptide is Casein kinase II subunit beta-2 (ckb-2) (Neurospora crassa (strain ATCC 24698 / 74-OR23-1A / CBS 708.71 / DSM 1257 / FGSC 987)).